The primary structure comprises 104 residues: Large ribosomal subunit protein bL21c (104 aa).

This sequence belongs to the bacterial ribosomal protein bL21 family. In terms of assembly, part of the 50S ribosomal subunit.

It localises to the plastid. Its subcellular location is the chloroplast. Its function is as follows. This protein binds to 23S rRNA. The polypeptide is Large ribosomal subunit protein bL21c (Guillardia theta (Cryptophyte)).